Here is a 370-residue protein sequence, read N- to C-terminus: Phosphoserine aminotransferase (370 aa).

Methionine 1 carries the post-translational modification N-acetylmethionine. Histidine 44 and arginine 45 together coordinate O-phospho-L-serine. Position 51 is an N6-acetyllysine (lysine 51). Positions 79, 80, and 107 each coordinate pyridoxal 5'-phosphate. At lysine 127 the chain carries N6-acetyllysine. Pyridoxal 5'-phosphate contacts are provided by threonine 156, aspartate 176, and glutamine 199. Lysine 200 is modified (N6-(pyridoxal phosphate)lysine). Asparagine 241 and threonine 242 together coordinate pyridoxal 5'-phosphate. N6-acetyllysine occurs at positions 269, 318, and 323. Residue serine 331 is modified to Phosphoserine. Lysine 333 carries the post-translational modification N6-acetyllysine. Residues histidine 335, arginine 336, and arginine 342 each contribute to the O-phospho-L-serine site.

Belongs to the class-V pyridoxal-phosphate-dependent aminotransferase family. SerC subfamily. Homodimer. Requires pyridoxal 5'-phosphate as cofactor.

The enzyme catalyses O-phospho-L-serine + 2-oxoglutarate = 3-phosphooxypyruvate + L-glutamate. It functions in the pathway amino-acid biosynthesis; L-serine biosynthesis; L-serine from 3-phospho-D-glycerate: step 2/3. Involved in L-serine biosynthesis via the phosphorylated pathway, a three-step pathway converting the glycolytic intermediate 3-phospho-D-glycerate into L-serine. Catalyzes the second step, that is the pyridoxal 5'-phosphate-dependent transamination of 3-phosphohydroxypyruvate and L-glutamate to O-phosphoserine (OPS) and alpha-ketoglutarate. This chain is Phosphoserine aminotransferase (PSAT1), found in Oryctolagus cuniculus (Rabbit).